A 440-amino-acid polypeptide reads, in one-letter code: Ribulose bisphosphate carboxylase large chain (440 aa).

K4 carries the N6,N6,N6-trimethyllysine modification. 2 residues coordinate substrate: N113 and T163. K165 (proton acceptor) is an active-site residue. Substrate is bound at residue K167. K191, D193, and E194 together coordinate Mg(2+). Position 191 is an N6-carboxylysine (K191). H284 acts as the Proton acceptor in catalysis. Substrate-binding residues include R285, H317, and S369.

Belongs to the RuBisCO large chain family. Type I subfamily. Heterohexadecamer of 8 large chains and 8 small chains; disulfide-linked. The disulfide link is formed within the large subunit homodimers. Mg(2+) is required as a cofactor. In terms of processing, the disulfide bond which can form in the large chain dimeric partners within the hexadecamer appears to be associated with oxidative stress and protein turnover.

Its subcellular location is the plastid. The protein resides in the chloroplast. The enzyme catalyses 2 (2R)-3-phosphoglycerate + 2 H(+) = D-ribulose 1,5-bisphosphate + CO2 + H2O. It carries out the reaction D-ribulose 1,5-bisphosphate + O2 = 2-phosphoglycolate + (2R)-3-phosphoglycerate + 2 H(+). Functionally, ruBisCO catalyzes two reactions: the carboxylation of D-ribulose 1,5-bisphosphate, the primary event in carbon dioxide fixation, as well as the oxidative fragmentation of the pentose substrate in the photorespiration process. Both reactions occur simultaneously and in competition at the same active site. In Dicksonia antarctica (Australian tree fern), this protein is Ribulose bisphosphate carboxylase large chain.